Here is a 952-residue protein sequence, read N- to C-terminus: Isoleucine--tRNA ligase (952 aa).

Positions 60-70 match the 'HIGH' region motif; that stretch reads PYANGSLHIGH. L-isoleucyl-5'-AMP is bound at residue Glu-562. Residues 603-607 carry the 'KMSKS' region motif; it reads KMSKS. Residue Lys-606 participates in ATP binding. Zn(2+) is bound by residues Cys-921, Cys-924, Cys-941, and Cys-944.

This sequence belongs to the class-I aminoacyl-tRNA synthetase family. IleS type 1 subfamily. As to quaternary structure, monomer. It depends on Zn(2+) as a cofactor.

It localises to the cytoplasm. The enzyme catalyses tRNA(Ile) + L-isoleucine + ATP = L-isoleucyl-tRNA(Ile) + AMP + diphosphate. Catalyzes the attachment of isoleucine to tRNA(Ile). As IleRS can inadvertently accommodate and process structurally similar amino acids such as valine, to avoid such errors it has two additional distinct tRNA(Ile)-dependent editing activities. One activity is designated as 'pretransfer' editing and involves the hydrolysis of activated Val-AMP. The other activity is designated 'posttransfer' editing and involves deacylation of mischarged Val-tRNA(Ile). This is Isoleucine--tRNA ligase from Microcystis aeruginosa (strain NIES-843 / IAM M-2473).